A 440-amino-acid chain; its full sequence is Xaa-Pro dipeptidase (440 aa).

Mn(2+) is bound by residues aspartate 244, aspartate 255, histidine 335, glutamate 380, and glutamate 419.

The protein belongs to the peptidase M24B family. Bacterial-type prolidase subfamily. The cofactor is Mn(2+).

The enzyme catalyses Xaa-L-Pro dipeptide + H2O = an L-alpha-amino acid + L-proline. Its function is as follows. Splits dipeptides with a prolyl residue in the C-terminal position. This is Xaa-Pro dipeptidase from Shewanella pealeana (strain ATCC 700345 / ANG-SQ1).